We begin with the raw amino-acid sequence, 183 residues long: Casparian strip membrane protein 2 (183 aa).

Residues 1–23 (MDSGEQGETSKAPLNKGVSRGVS) are Cytoplasmic-facing. A helical transmembrane segment spans residues 24 to 44 (ILDLILRVIAVISTLASAIAM). The Extracellular segment spans residues 45-71 (GTTNETLPLFTPFIQFKARYSDLPALT). N48 carries N-linked (GlcNAc...) asparagine glycosylation. The helical transmembrane segment at 72–92 (FFVVANSIVSAYLILSLPLSI) threads the bilayer. Topologically, residues 93 to 104 (AHIIRSGAKYSR) are cytoplasmic. A helical membrane pass occupies residues 105–125 (LVLIIFDAAMLALVTAASSAA). At 126–158 (TAIVYLAHKGNVRANWLAICQQLDSFCERTSGS) the chain is on the extracellular side. A helical transmembrane segment spans residues 159 to 179 (LVGSFGAMVLLILLILLSAMA). At 180–183 (LARR) the chain is on the cytoplasmic side.

The protein belongs to the Casparian strip membrane proteins (CASP) family. In terms of assembly, homodimer and heterodimers.

Its subcellular location is the cell membrane. In terms of biological role, regulates membrane-cell wall junctions and localized cell wall deposition. Required for establishment of the Casparian strip membrane domain (CSD) and the subsequent formation of Casparian strips, a cell wall modification of the root endodermis that determines an apoplastic barrier between the intraorganismal apoplasm and the extraorganismal apoplasm and prevents lateral diffusion. The sequence is that of Casparian strip membrane protein 2 from Triticum aestivum (Wheat).